We begin with the raw amino-acid sequence, 242 residues long: Mediator of RNA polymerase II transcription subunit 19-A (242 aa).

Positions 1-15 are enriched in polar residues; the sequence is MTEIFSTLFGQNDAQ. Disordered regions lie at residues 1–33 and 171–242; these read MTEI…PPPS and PPKK…NSLR. Residues 171–184 are compositionally biased toward basic residues; sequence PPKKKSKHKHRHHH. Residues 193–210 are compositionally biased toward basic and acidic residues; it reads TRTDPTKKKKKKDNEPER. Residues 211–223 are compositionally biased toward basic residues; that stretch reads RKKKKDKKKKKNR. Residues 232-242 show a composition bias toward polar residues; it reads TGSQPNSNSLR.

This sequence belongs to the Mediator complex subunit 19 family. As to quaternary structure, component of the Mediator complex.

Its subcellular location is the nucleus. Component of the Mediator complex, a coactivator involved in the regulated transcription of nearly all RNA polymerase II-dependent genes. Mediator functions as a bridge to convey information from gene-specific regulatory proteins to the basal RNA polymerase II transcription machinery. Mediator is recruited to promoters by direct interactions with regulatory proteins and serves as a scaffold for the assembly of a functional preinitiation complex with RNA polymerase II and the general transcription factors. This chain is Mediator of RNA polymerase II transcription subunit 19-A (med19a), found in Danio rerio (Zebrafish).